The following is a 364-amino-acid chain: Aminomethyltransferase (364 aa).

It belongs to the GcvT family. As to quaternary structure, the glycine cleavage system is composed of four proteins: P, T, L and H.

The catalysed reaction is N(6)-[(R)-S(8)-aminomethyldihydrolipoyl]-L-lysyl-[protein] + (6S)-5,6,7,8-tetrahydrofolate = N(6)-[(R)-dihydrolipoyl]-L-lysyl-[protein] + (6R)-5,10-methylene-5,6,7,8-tetrahydrofolate + NH4(+). Functionally, the glycine cleavage system catalyzes the degradation of glycine. In Shewanella baltica (strain OS223), this protein is Aminomethyltransferase.